The chain runs to 107 residues: Large ribosomal subunit protein uL24 (107 aa).

Belongs to the universal ribosomal protein uL24 family. As to quaternary structure, part of the 50S ribosomal subunit.

In terms of biological role, one of two assembly initiator proteins, it binds directly to the 5'-end of the 23S rRNA, where it nucleates assembly of the 50S subunit. One of the proteins that surrounds the polypeptide exit tunnel on the outside of the subunit. The protein is Large ribosomal subunit protein uL24 of Thermoanaerobacter pseudethanolicus (strain ATCC 33223 / 39E) (Clostridium thermohydrosulfuricum).